Consider the following 376-residue polypeptide: tRNA(Met) cytidine acetate ligase (376 aa).

Residues Ile7 to Gln20, Gly102, Asn160, and Arg181 contribute to the ATP site.

It belongs to the TmcAL family.

Its subcellular location is the cytoplasm. The enzyme catalyses cytidine(34) in elongator tRNA(Met) + acetate + ATP = N(4)-acetylcytidine(34) in elongator tRNA(Met) + AMP + diphosphate. Its function is as follows. Catalyzes the formation of N(4)-acetylcytidine (ac(4)C) at the wobble position of elongator tRNA(Met), using acetate and ATP as substrates. First activates an acetate ion to form acetyladenylate (Ac-AMP) and then transfers the acetyl group to tRNA to form ac(4)C34. In Exiguobacterium sp. (strain ATCC BAA-1283 / AT1b), this protein is tRNA(Met) cytidine acetate ligase.